The primary structure comprises 1054 residues: DNA-directed RNA polymerase subunit beta' (1054 aa).

Asp-383, Asp-385, and Asp-387 together coordinate Mg(2+). Cys-752, Cys-826, Cys-833, and Cys-836 together coordinate Zn(2+).

It belongs to the RNA polymerase beta' chain family. As to quaternary structure, the RNAP catalytic core consists of 2 alpha, 1 beta, 1 beta' and 1 omega subunit. When a sigma factor is associated with the core the holoenzyme is formed, which can initiate transcription. Mg(2+) is required as a cofactor. Zn(2+) serves as cofactor.

It catalyses the reaction RNA(n) + a ribonucleoside 5'-triphosphate = RNA(n+1) + diphosphate. In terms of biological role, DNA-dependent RNA polymerase catalyzes the transcription of DNA into RNA using the four ribonucleoside triphosphates as substrates. This Weissella paramesenteroides (Leuconostoc paramesenteroides) protein is DNA-directed RNA polymerase subunit beta'.